Here is a 310-residue protein sequence, read N- to C-terminus: Porphobilinogen deaminase (310 aa).

Cysteine 243 is subject to S-(dipyrrolylmethanemethyl)cysteine.

It belongs to the HMBS family. In terms of assembly, monomer. The cofactor is dipyrromethane.

It catalyses the reaction 4 porphobilinogen + H2O = hydroxymethylbilane + 4 NH4(+). The protein operates within porphyrin-containing compound metabolism; protoporphyrin-IX biosynthesis; coproporphyrinogen-III from 5-aminolevulinate: step 2/4. In terms of biological role, tetrapolymerization of the monopyrrole PBG into the hydroxymethylbilane pre-uroporphyrinogen in several discrete steps. The polypeptide is Porphobilinogen deaminase (Mannheimia succiniciproducens (strain KCTC 0769BP / MBEL55E)).